A 385-amino-acid chain; its full sequence is Spermidine/putrescine import ATP-binding protein PotA (385 aa).

In terms of domain architecture, ABC transporter spans 6-238 (IEFKNVSKVF…PINHFVATFI (233 aa)). 40–47 (GSSGSGKS) is a binding site for ATP.

The protein belongs to the ABC transporter superfamily. Spermidine/putrescine importer (TC 3.A.1.11.1) family. As to quaternary structure, the complex is composed of two ATP-binding proteins (PotA), two transmembrane proteins (PotB and PotC) and a solute-binding protein (PotD).

The protein localises to the cell membrane. It carries out the reaction ATP + H2O + polyamine-[polyamine-binding protein]Side 1 = ADP + phosphate + polyamineSide 2 + [polyamine-binding protein]Side 1.. Functionally, part of the ABC transporter complex PotABCD involved in spermidine/putrescine import. Responsible for energy coupling to the transport system. This Streptococcus sanguinis (strain SK36) protein is Spermidine/putrescine import ATP-binding protein PotA.